The following is a 347-amino-acid chain: Ribosomal RNA large subunit methyltransferase M (347 aa).

S-adenosyl-L-methionine-binding positions include S184, 217–220 (APGG), D236, D256, and D272. The active-site Proton acceptor is the K301.

The protein belongs to the class I-like SAM-binding methyltransferase superfamily. RNA methyltransferase RlmE family. RlmM subfamily. As to quaternary structure, monomer.

The protein resides in the cytoplasm. It catalyses the reaction cytidine(2498) in 23S rRNA + S-adenosyl-L-methionine = 2'-O-methylcytidine(2498) in 23S rRNA + S-adenosyl-L-homocysteine + H(+). Functionally, catalyzes the 2'-O-methylation at nucleotide C2498 in 23S rRNA. This Xanthomonas oryzae pv. oryzae (strain PXO99A) protein is Ribosomal RNA large subunit methyltransferase M.